Reading from the N-terminus, the 2027-residue chain is Citron Rho-interacting kinase (2027 aa).

M1 is modified (N-acetylmethionine). One can recognise a Protein kinase domain in the interval 97–360 (FEVRSLVGCG…FEGLCCHPFF (264 aa)). Residues 103-111 (VGCGHFAEV) and K126 each bind ATP. D221 functions as the Proton acceptor in the catalytic mechanism. The 71-residue stretch at 361-431 (SKIDWNNIRN…SKALGILGRS (71 aa)) folds into the AGC-kinase C-terminal domain. S433, S440, S480, and S582 each carry phosphoserine. Residues 453–1297 (IKSKELQDSQ…SAREEAAHRK (845 aa)) adopt a coiled-coil conformation. The segment at 1091–1302 (LAVKEHKAEI…AAHRKATDHP (212 aa)) is interaction with Rho/Rac. Phosphotyrosine is present on Y1196. Residues 1290–1303 (REEAAHRKATDHPH) show a composition bias toward basic and acidic residues. Disordered stretches follow at residues 1290-1310 (REEAAHRKATDHPHPSTPATA) and 1322-1351 (SPEHQPSAMSLLAPPSSRRKESSTPEEFSR). Over residues 1327-1337 (PSAMSLLAPPS) the composition is skewed to low complexity. Residues 1339–1351 (RRKESSTPEEFSR) are compositionally biased toward basic and acidic residues. Residues 1362–1411 (PHRFNVGLNMRATKCAVCLDTVHFGRQASKCLECQVMCHPKCSTCLPATC) form a Phorbol-ester/DAG-type zinc finger. In terms of domain architecture, PH spans 1443 to 1563 (SLHLEGWMKV…WVTALESVVA (121 aa)). Positions 1591–1881 (RLDMNCTLPF…RYLGPAISSG (291 aa)) constitute a CNH domain. Position 1721 is an N6-acetyllysine (K1721). Residues 1905 to 2012 (ESGTEHHRGP…RGRLPAGAVR (108 aa)) are disordered. Residue S1940 is modified to Phosphoserine. Residues 1948 to 2003 (SHPREPSTPHRYREGRTELRRDKSPGRPLEREKSPGRMLSTRRERSPGRLFEDSSR) show a composition bias toward basic and acidic residues. The short motif at 1953-1958 (PSTPHR) is the SH3-binding element. The residue at position 1993 (S1993) is a Phosphoserine. At T2013 the chain carries Phosphothreonine.

It belongs to the protein kinase superfamily. AGC Ser/Thr protein kinase family. Directly interacts with KIF14 depending on the activation state (stronger interaction with the kinase-dead form). Homodimer. Interacts with TTC3.

The protein resides in the cytoplasm. It carries out the reaction L-seryl-[protein] + ATP = O-phospho-L-seryl-[protein] + ADP + H(+). The catalysed reaction is L-threonyl-[protein] + ATP = O-phospho-L-threonyl-[protein] + ADP + H(+). Functionally, plays a role in cytokinesis. Required for KIF14 localization to the central spindle and midbody. Putative RHO/RAC effector that binds to the GTP-bound forms of RHO and RAC1. It probably binds p21 with a tighter specificity in vivo. Displays serine/threonine protein kinase activity. Plays an important role in the regulation of cytokinesis and the development of the central nervous system. Phosphorylates MYL9/MLC2. The polypeptide is Citron Rho-interacting kinase (CIT) (Homo sapiens (Human)).